We begin with the raw amino-acid sequence, 357 residues long: Peptide chain release factor 1 (357 aa).

Position 234 is an N5-methylglutamine (Q234). A disordered region spans residues 284–304; that stretch reads RIEGERSEDRKSKIGTGDRSE.

It belongs to the prokaryotic/mitochondrial release factor family. Methylated by PrmC. Methylation increases the termination efficiency of RF1.

It localises to the cytoplasm. Its function is as follows. Peptide chain release factor 1 directs the termination of translation in response to the peptide chain termination codons UAG and UAA. The protein is Peptide chain release factor 1 of Pelagibacter ubique (strain HTCC1062).